Consider the following 1361-residue polypeptide: Zinc finger protein GLI4 (1361 aa).

The tract at residues 185 to 270 (SSFGHTPLLH…PQPPDHLTDL (86 aa)) is disordered. 2 stretches are compositionally biased toward polar residues: residues 198–208 (TFASRQQGALT) and 227–241 (NKVS…TVNQ). C2H2-type zinc fingers lie at residues 289-314 (TNCH…NNDH), 322-349 (FVCR…MRRH), 355-379 (HKCT…LRSH), 385-410 (YVCD…NRTH), and 416-441 (YICK…KTVH). Disordered stretches follow at residues 434–527 (RKHV…TNNI), 556–584 (STVS…GTAE), 647–720 (NERR…LPNL), 787–832 (NAGL…SMNS), 906–946 (QNRE…APGA), and 1134–1230 (DGLH…PKDN). Residues 475 to 502 (SGREHSDSVSRDQEHCLQTRTIKTEDNM) show a composition bias toward basic and acidic residues. Residues 506–522 (SSPGGQSSCSSEPSPYG) show a composition bias toward low complexity. The span at 573-584 (QRIHSAETGTAE) shows a compositional bias: basic and acidic residues. Positions 653–670 (TSSTLSSAYTSRRSSGIS) are enriched in low complexity. Composition is skewed to polar residues over residues 672–695 (YFSS…SSAD) and 710–720 (EASQHSGLPNL). Positions 805-821 (RASDPVRRTAGIDDKPL) are enriched in basic and acidic residues. Composition is skewed to polar residues over residues 913-939 (QNLQ…NTPE) and 1142-1164 (YTVQ…SGQA). Residues 1172–1183 (PRPPAAPHPPNR) are compositionally biased toward pro residues.

The protein belongs to the GLI C2H2-type zinc-finger protein family.

Its subcellular location is the nucleus. Functionally, has an essential role in the early embryonic patterning of mesoderm and neuroectoderm. The chain is Zinc finger protein GLI4 (gli4) from Xenopus laevis (African clawed frog).